The following is a 216-amino-acid chain: Large ribosomal subunit protein uL1 (216 aa).

The protein belongs to the universal ribosomal protein uL1 family.

This chain is Large ribosomal subunit protein uL1, found in Caenorhabditis elegans.